The sequence spans 118 residues: uncharacterized protein (118 aa).

Cysteines 11 and 14 form a disulfide.

Belongs to the ArsC family.

This is an uncharacterized protein from Bacillus subtilis (strain 168).